Reading from the N-terminus, the 619-residue chain is Chaperone protein HscA homolog (619 aa).

Belongs to the heat shock protein 70 family.

Its function is as follows. Chaperone involved in the maturation of iron-sulfur cluster-containing proteins. Has a low intrinsic ATPase activity which is markedly stimulated by HscB. This Laribacter hongkongensis (strain HLHK9) protein is Chaperone protein HscA homolog.